The chain runs to 805 residues: FAD-dependent monooxygenase verC1 (805 aa).

An N-terminal signal peptide occupies residues 1–20 (MTFRVIIVGGGVAGLTLASA). FAD-binding residues include E32, A46, and R107. A glycan (N-linked (GlcNAc...) asparagine) is linked at N132. The active site involves Y214. FAD contacts are provided by D306 and A319. Transmembrane regions (helical) follow at residues 551–571 (ALTMAQIPTLFTFYGQMAGLG), 604–624 (IAVLPAIIVSYYIPLSAAFFW), 632–652 (SWLFVWQMHPIWTAITLYLFS), 671–691 (LPVIKFSMTVLVIGAAGFWMW), 703–723 (VFFPTAVPSTQAPFAACVCAI), 726–746 (WDMLSTFGSTFLWLGYLIWDL), and 761–781 (IYGVAAFVALGPGAAIGLGWL).

Belongs to the paxM FAD-dependent monooxygenase family.

It is found in the membrane. Its pathway is secondary metabolite biosynthesis; terpenoid biosynthesis. It participates in mycotoxin biosynthesis. Functionally, FAD-dependent monooxygenase; part of the gene cluster that mediates the biosynthesis of the neurotoxin verrucosidin, a methylated alpha-pyrone polyketide that inhibits oxidative phosphorylation in mitochondria and thereby causes neurological diseases. The carbon backbone of verrucosidin is synthesized by the HR-PKS verA, and further modified by the other verrucodidin cluster enzymes. This chain is FAD-dependent monooxygenase verC1, found in Penicillium polonicum.